The primary structure comprises 450 residues: uncharacterized protein (450 aa).

The TRAM domain occupies 1–58 (MQKNQIVDLEITDLSYEAMGVAHLDGMTVFVNNALPGEIVSAKLLKVKKNFAFAKIEK). S-adenosyl-L-methionine contacts are provided by glutamine 280, tyrosine 309, glutamate 330, and aspartate 378. Residue cysteine 405 is the Nucleophile of the active site.

It belongs to the class I-like SAM-binding methyltransferase superfamily. RNA M5U methyltransferase family.

This is an uncharacterized protein from Lactobacillus johnsonii (strain CNCM I-12250 / La1 / NCC 533).